A 3106-amino-acid chain; its full sequence is Cilia- and flagella-associated protein 54 (3106 aa).

Low complexity-rich tracts occupy residues 1–24 (MASS…VSPV), 34–48 (STAV…KSSS), and 2356–2368 (ESCS…TSTT). Disordered stretches follow at residues 1-58 (MASS…THSE) and 2354-2374 (PEES…KDDS).

This sequence belongs to the CFAP54 family. Expressed at high level in the testis and at a low level in the lung and brain.

It localises to the cytoplasm. The protein localises to the cytoskeleton. Its subcellular location is the cilium axoneme. Its function is as follows. Required for assembly and function of cilia and flagella. The polypeptide is Cilia- and flagella-associated protein 54 (Mus musculus (Mouse)).